A 310-amino-acid chain; its full sequence is Probable manganese-dependent inorganic pyrophosphatase (310 aa).

6 residues coordinate Mn(2+): H9, D13, D15, D75, H97, and D149.

Belongs to the PPase class C family. The cofactor is Mn(2+).

It is found in the cytoplasm. The enzyme catalyses diphosphate + H2O = 2 phosphate + H(+). The chain is Probable manganese-dependent inorganic pyrophosphatase from Bacillus cytotoxicus (strain DSM 22905 / CIP 110041 / 391-98 / NVH 391-98).